We begin with the raw amino-acid sequence, 348 residues long: GTPase Obg 1 (348 aa).

The 159-residue stretch at 1–159 (MSFVDEAKIH…HCVLLKLKIV (159 aa)) folds into the Obg domain. The OBG-type G domain maps to 160 to 329 (SDVGIIGMPN…LHAQVKKAVV (170 aa)). Residues 166–173 (GMPNAGKS), 191–195 (FTTLE), 212–215 (DIPG), 279–282 (NKCD), and 310–312 (GDE) contribute to the GTP site. Mg(2+) is bound by residues S173 and T193.

This sequence belongs to the TRAFAC class OBG-HflX-like GTPase superfamily. OBG GTPase family. Monomer. Mg(2+) serves as cofactor.

The protein localises to the cytoplasm. Functionally, an essential GTPase which binds GTP, GDP and possibly (p)ppGpp with moderate affinity, with high nucleotide exchange rates and a fairly low GTP hydrolysis rate. Plays a role in control of the cell cycle, stress response, ribosome biogenesis and in those bacteria that undergo differentiation, in morphogenesis control. This chain is GTPase Obg 1, found in Anaplasma marginale (strain Florida).